A 243-amino-acid chain; its full sequence is Aldehyde decarbonylase (243 aa).

5 residues coordinate Fe cation: glutamate 45, glutamate 73, histidine 76, glutamate 128, and histidine 160.

Belongs to the aldehyde decarbonylase family. Binds 2 metal cations per subunit. The catalytic dinuclear metal-binding site could be either a di-iron or a manganese-iron cofactor. is required as a cofactor.

It carries out the reaction a long-chain fatty aldehyde + 2 NADPH + O2 + H(+) = a long-chain alkane + formate + 2 NADP(+) + H2O. Its function is as follows. Catalyzes the decarbonylation of fatty aldehydes to alkanes. Requires the presence of ferredoxin, ferredoxin reductase and NADPH for in vitro decarbonylase activity. Involved in the biosynthesis of alkanes, mainly heptadecane and pentadecane. The sequence is that of Aldehyde decarbonylase from Prochlorococcus marinus (strain MIT 9313).